A 216-amino-acid chain; its full sequence is U1 small nuclear ribonucleoprotein C (216 aa).

The Matrin-type zinc-finger motif lies at 4–36 (FFCDYCDVYLTHDSMSVRKAHNAGRNHLRNVVE). 3 stretches are compositionally biased toward pro residues: residues 68–80 (AMAPPGAFPPPFG), 87–198 (QLPP…PAPP), and 206–216 (PGPPPGLSEKR). The interval 68-216 (AMAPPGAFPP…GPPPGLSEKR (149 aa)) is disordered.

The protein belongs to the U1 small nuclear ribonucleoprotein C family. In terms of assembly, U1 snRNP is composed of the 7 core Sm proteins B/B', D1, D2, D3, E, F and G that assemble in a heptameric protein ring on the Sm site of the small nuclear RNA to form the core snRNP, and at least 3 U1 snRNP-specific proteins U1-70K, U1-A and U1-C. U1-C interacts with U1 snRNA and the 5' splice-site region of the pre-mRNA.

The protein localises to the nucleus. Its function is as follows. Component of the spliceosomal U1 snRNP, which is essential for recognition of the pre-mRNA 5' splice-site and the subsequent assembly of the spliceosome. U1-C is directly involved in initial 5' splice-site recognition for both constitutive and regulated alternative splicing. The interaction with the 5' splice-site seems to precede base-pairing between the pre-mRNA and the U1 snRNA. Stimulates commitment or early (E) complex formation by stabilizing the base pairing of the 5' end of the U1 snRNA and the 5' splice-site region. This Aspergillus fumigatus (strain ATCC MYA-4609 / CBS 101355 / FGSC A1100 / Af293) (Neosartorya fumigata) protein is U1 small nuclear ribonucleoprotein C.